The primary structure comprises 469 residues: Glutamate--tRNA ligase (469 aa).

Positions 11–21 match the 'HIGH' region motif; sequence PSPTGFIHLGN. The 'KMSKS' region signature appears at 243–247; it reads KMSKR. Lysine 246 is a binding site for ATP.

It belongs to the class-I aminoacyl-tRNA synthetase family. Glutamate--tRNA ligase type 1 subfamily. As to quaternary structure, monomer.

It localises to the cytoplasm. The catalysed reaction is tRNA(Glu) + L-glutamate + ATP = L-glutamyl-tRNA(Glu) + AMP + diphosphate. Functionally, catalyzes the attachment of glutamate to tRNA(Glu) in a two-step reaction: glutamate is first activated by ATP to form Glu-AMP and then transferred to the acceptor end of tRNA(Glu). In Burkholderia cenocepacia (strain HI2424), this protein is Glutamate--tRNA ligase.